Consider the following 337-residue polypeptide: Putative olfactory receptor 1F12P (337 aa).

Residues 1–25 lie on the Extracellular side of the membrane; that stretch reads MEGKNQTNISEFLLLGFSSWQQQQV. N-linked (GlcNAc...) asparagine glycans are attached at residues Asn5 and Asn8. Residues 26 to 49 form a helical membrane-spanning segment; it reads LLFALFLCLYLTGLFGNLLILLAI. Over 50–57 the chain is Cytoplasmic; that stretch reads GSDHCLHT. The chain crosses the membrane as a helical span at residues 58–79; the sequence is PMYFFLANLSLVDLCLPSATVP. The Extracellular portion of the chain corresponds to 80 to 100; the sequence is KMLLNIQTQTQTISYPGCLAQ. A disulfide bond links Cys97 and Cys189. A helical membrane pass occupies residues 101–120; sequence MYFCMMFANMDNFLLTVMAY. At 121 to 139 the chain is on the cytoplasmic side; the sequence is DRYVAICHPLHYSTIMALR. The helical transmembrane segment at 140 to 158 threads the bilayer; sequence LCASLVAAPWVIAILNPLL. The Extracellular portion of the chain corresponds to 159 to 196; that stretch reads HTLMMAHLHFCSDNVIHHFFCDINSLLPLSCSDTSLNQ. The helical transmembrane segment at 197 to 219 threads the bilayer; it reads LSVLATVGLIFVVPSVCILVSYI. The Cytoplasmic portion of the chain corresponds to 220–236; the sequence is LIVSAVMKVPSAQGKLK. Residues 237-259 form a helical membrane-spanning segment; that stretch reads AFSTCGSHLALVILFYGAITGVY. The Extracellular segment spans residues 260–272; sequence MSPLSNHSTEKDS. Asn265 is a glycosylation site (N-linked (GlcNAc...) asparagine). Residues 273 to 292 form a helical membrane-spanning segment; the sequence is AASVIFMVVAPVLNPFIYSL. The Cytoplasmic portion of the chain corresponds to 293 to 337; that stretch reads RNNELKGTLKKTLSRPGAVAHACNPSTLGGRGGWIMRSGDRDHPG.

This sequence belongs to the G-protein coupled receptor 1 family.

Its subcellular location is the cell membrane. Odorant receptor. This is Putative olfactory receptor 1F12P from Homo sapiens (Human).